Reading from the N-terminus, the 160-residue chain is Phosphopantetheine adenylyltransferase (160 aa).

This sequence belongs to the eukaryotic CoaD family.

The protein localises to the cytoplasm. It catalyses the reaction (R)-4'-phosphopantetheine + ATP + H(+) = 3'-dephospho-CoA + diphosphate. It functions in the pathway cofactor biosynthesis; coenzyme A biosynthesis. Reversibly transfers an adenylyl group from ATP to 4'-phosphopantetheine, yielding dephospho-CoA (dPCoA) and pyrophosphate. This is Phosphopantetheine adenylyltransferase from Pyrococcus furiosus (strain ATCC 43587 / DSM 3638 / JCM 8422 / Vc1).